A 966-amino-acid chain; its full sequence is Serine/threonine-protein phosphatase 6 regulatory subunit 2 (966 aa).

Serine 289 is subject to Phosphoserine. Composition is skewed to basic and acidic residues over residues 408 to 424 (TEAS…HENG) and 669 to 687 (GPER…HRDA). 2 disordered regions span residues 408–436 (TEAS…PAAS) and 657–707 (GAPH…VEGD). 2 positions are modified to phosphoserine: serine 771 and serine 828. Positions 819 to 856 (ASDSSSSGGSHSEDGDQKAASAMDAVSRGPGREAPPLP) are disordered.

The protein belongs to the SAPS family. Protein phosphatase 6 (PP6) holoenzyme is proposed to be a heterotrimeric complex formed by the catalytic subunit, a SAPS domain-containing subunit (PP6R) and an ankyrin repeat-domain containing regulatory subunit (ARS). Interacts with PPP6C and NFKBIE. Interacts with ANKRD28. As to expression, ubiquitously expressed with strongest expression in the testis followed by liver, heart, kidney, brain and placenta.

The protein localises to the cytoplasm. Regulatory subunit of protein phosphatase 6 (PP6). May function as a scaffolding PP6 subunit. Involved in the PP6-mediated dephosphorylation of NFKBIE opposing its degradation in response to TNF-alpha. The protein is Serine/threonine-protein phosphatase 6 regulatory subunit 2 (PPP6R2) of Homo sapiens (Human).